A 335-amino-acid polypeptide reads, in one-letter code: LIM and SH3 domain protein F42H10.3 (335 aa).

Residues 5–65 form the LIM zinc-binding domain; the sequence is CAREDCGKTV…DPHYPKTVAS (61 aa). 2 Nebulin repeats span residues 66–97 and 98–132; these read VMAD…KMKG and TKIE…QKAR. Positions 128 to 142 are enriched in basic and acidic residues; it reads DQKARQEEVRPKEEI. Disordered regions lie at residues 128–151 and 233–264; these read DQKA…PTPI and DFAG…ISPT. Positions 242 to 260 are enriched in low complexity; sequence SNSISSTSPHSTLSSPQST. One can recognise an SH3 domain in the interval 266–327; the sequence is KAGFAVKAIY…PANYVQPHKL (62 aa).

This Caenorhabditis elegans protein is LIM and SH3 domain protein F42H10.3.